The primary structure comprises 239 residues: Ribosome assembly factor mrt4 (239 aa).

It belongs to the universal ribosomal protein uL10 family. As to quaternary structure, associates with the pre-60S ribosomal particle.

It localises to the nucleus. The protein resides in the nucleolus. The protein localises to the cytoplasm. In terms of biological role, component of the ribosome assembly machinery. Nuclear paralog of the ribosomal protein P0, it binds pre-60S subunits at an early stage of assembly in the nucleolus, and is replaced by P0 in cytoplasmic pre-60S subunits and mature 80S ribosomes. In Candida glabrata (strain ATCC 2001 / BCRC 20586 / JCM 3761 / NBRC 0622 / NRRL Y-65 / CBS 138) (Yeast), this protein is Ribosome assembly factor mrt4.